The sequence spans 860 residues: Spindle and centriole-associated protein 1 (860 aa).

Disordered stretches follow at residues 160–200, 232–254, and 293–330; these read ESVI…SQSN, QSQM…QKAA, and KQLL…SSSN. The residue at position 236 (threonine 236) is a Phosphothreonine. Residues 236–249 show a composition bias toward low complexity; it reads TASSGTPSSASPSG. A compositionally biased stretch (polar residues) spans 308–330; that stretch reads PSKQKSSMLSASTASTDLPSSSN. Residues 383-437 adopt a coiled-coil conformation; the sequence is RYLKESELQLRKEVETRQRLEEALGDHRELIDALTAEVLFLREENTATQARLQQY. Serine 646 carries the post-translational modification Phosphoserine. The stretch at 729–755 forms a coiled coil; that stretch reads SSMEERIAELNRQSMEARGKLLQLIEQ. Phosphoserine is present on residues serine 765, serine 769, and serine 824. A disordered region spans residues 790 to 860; that stretch reads IPGAEAPESS…GWFALSTHVS (71 aa). Low complexity predominate over residues 808-824; the sequence is SGLNSRRSSGAASNSCS.

Interacts with CEP120.

Its subcellular location is the cytoplasm. It localises to the cytoskeleton. The protein localises to the microtubule organizing center. The protein resides in the centrosome. It is found in the centriole. Its subcellular location is the spindle. Regulator required for centriole duplication. for proper bipolar spindle formation and chromosome congression in mitosis. The protein is Spindle and centriole-associated protein 1 (SPICE1) of Bos taurus (Bovine).